A 424-amino-acid chain; its full sequence is Homoserine O-succinyltransferase (424 aa).

An AB hydrolase-1 domain is found at 67–381 (NAVLVCHALN…PHGHDAFLLD (315 aa)). The Nucleophile role is filled by Ser-173. Substrate is bound at residue Arg-243. Residues Asp-342 and His-375 contribute to the active site. Asp-376 contacts substrate.

This sequence belongs to the AB hydrolase superfamily. MetX family. Homodimer.

It is found in the cytoplasm. The enzyme catalyses L-homoserine + succinyl-CoA = O-succinyl-L-homoserine + CoA. The protein operates within amino-acid biosynthesis; L-methionine biosynthesis via de novo pathway; O-succinyl-L-homoserine from L-homoserine: step 1/1. In terms of biological role, transfers a succinyl group from succinyl-CoA to L-homoserine, forming succinyl-L-homoserine. In vitro, also has serine succinyl transferase activity. The polypeptide is Homoserine O-succinyltransferase (Bordetella petrii (strain ATCC BAA-461 / DSM 12804 / CCUG 43448)).